The primary structure comprises 249 residues: MRILISNDDGVNAPGLVALHAALADYAECVVIAPDQDKSGASSSLTLDRPLHPHTLANGFISLNGTPTDCVHLGIHGLLENQPDMVVSGINLGANLGDDVLYSGTVAAALEGRFLQRPSFAFSFLSRQPDNLATAAHYARLLVEAHEQLDLPPRTVLNVNIPNLPLEHIRGIQLTRLGHRARAAAPVKVVDPRGRAGYWIAAAGDVEDGGAGTDFHAVIQGYVSITPLQLDRTYQDGFSSLNTWLEGLR.

Residues D8, D9, S39, and N91 each contribute to the a divalent metal cation site.

The protein belongs to the SurE nucleotidase family. Requires a divalent metal cation as cofactor.

It is found in the cytoplasm. The enzyme catalyses a ribonucleoside 5'-phosphate + H2O = a ribonucleoside + phosphate. Its function is as follows. Nucleotidase that shows phosphatase activity on nucleoside 5'-monophosphates. In Pseudomonas savastanoi pv. phaseolicola (strain 1448A / Race 6) (Pseudomonas syringae pv. phaseolicola (strain 1448A / Race 6)), this protein is 5'-nucleotidase SurE.